The following is a 165-amino-acid chain: Choriogonadotropin subunit beta 3 (165 aa).

A signal peptide spans 1-20; the sequence is MEMFQGLLLLLLLSMGGTWA. 6 disulfides stabilise this stretch: Cys29–Cys77, Cys43–Cys92, Cys46–Cys130, Cys54–Cys108, Cys58–Cys110, and Cys113–Cys120. N-linked (GlcNAc...) asparagine glycosylation is found at Asn33 and Asn50. Residues 131 to 165 form a disordered region; the sequence is DDPRFQDSSSSKAPPPSLPSPSRLPGPSDTPILPQ. Residues Ser141, Ser147, Ser152, and Ser158 are each glycosylated (O-linked (GalNAc...) serine). The segment covering 143–154 has biased composition (pro residues); sequence APPPSLPSPSRL.

The protein belongs to the glycoprotein hormones subunit beta family. In terms of assembly, heterodimer of a common alpha chain identical in LH, FSH, TSH and HCG and a unique beta chain distinct in each of the hormones. High expression in the placenta throughout pregnancy.

Its subcellular location is the secreted. In terms of biological role, beta subunit of the human chorionic gonadotropin (hCG). hCG is a complex glycoprotein composed of two glycosylated subunits alpha and beta which are non-covalently associated. The alpha subunit is identical to those in the pituitary gonadotropin hormones (LH, FSH and TSH). The beta subunits are distinct in each of the hormones and confer receptor and biological specificity. Has an essential role in pregnancy and maternal adaptation. Stimulates the ovaries to synthesize the steroids that are essential for the maintenance of pregnancy. In Homo sapiens (Human), this protein is Choriogonadotropin subunit beta 3 (CGB3).